The following is a 491-amino-acid chain: Delayed-rectifier potassium channel regulatory subunit KCNS3 (491 aa).

Over 1–182 (MVFGEFFHRP…IRMENPAYCL (182 aa)) the chain is Cytoplasmic. A helical membrane pass occupies residues 183-204 (SAKLIAISSLSVVLASIVAMCV). Over 205–220 (HSMSEFQNEDGEVDDP) the chain is Extracellular. The chain crosses the membrane as a helical span at residues 221 to 243 (VLEGVEIACIAWFTGELAIRLVA). The Cytoplasmic segment spans residues 244 to 254 (APSQKKFWKNP). A helical membrane pass occupies residues 255 to 275 (LNIIDFVSIIPFYATLAVDTK). Residues 276–285 (EEESEDIENM) are Extracellular-facing. A helical; Voltage-sensor transmembrane segment spans residues 286-306 (GKVVQILRLMRIFRILKLARH). Residues 307–321 (SVGLRSLGATLRHSY) are Cytoplasmic-facing. The chain crosses the membrane as a helical span at residues 322 to 343 (HEVGLLLLFLSVGISIFSVLIY). The Extracellular portion of the chain corresponds to 344 to 357 (SVEKDEHKSSLTSI). An intramembrane region (helical) is located at residues 358 to 369 (PICWWWATISMT). Positions 370 to 375 (TVGYGD) match the Selectivity filter motif. The stretch at 370–377 (TVGYGDTH) is an intramembrane region. At 378-384 (PVTLAGK) the chain is on the extracellular side. A helical transmembrane segment spans residues 385-413 (IIASTCIICGILVVALPITIIFNKFSKYY). The Cytoplasmic portion of the chain corresponds to 414-491 (QKQKDMEVDQ…TASLENCTGK (78 aa)).

Belongs to the potassium channel family. S (TC 1.A.1.2) subfamily. Kv9.3/KCNS3 sub-subfamily. As to quaternary structure, heterotetramer with KCNB1. Does not form homomultimers.

It localises to the cell membrane. Functionally, potassium channel regulatory subunit that modulates the delayed rectifier potassium channel activity of KCNB1 by namely slowing down the deactivation and inactivation time constants. While it does not form functional channel on its own, it can form functional heterotetrameric channels with KCNB1. The protein is Delayed-rectifier potassium channel regulatory subunit KCNS3 of Mus musculus (Mouse).